The following is a 1898-amino-acid chain: Receptor-type tyrosine-protein phosphatase F (1898 aa).

A signal peptide spans 1–29; that stretch reads MAPEPAPGRRMVPLVPALVMLGLMAGAHG. The Extracellular segment spans residues 30-1254; that stretch reads DSKPVFVKVP…QQQEEPEMLW (1225 aa). Ig-like C2-type domains follow at residues 33–123, 135–224, and 232–314; these read PVFV…AKLS, PTID…ANLY, and PRFS…AQVT. C54 and C107 are disulfide-bonded. 68-77 contacts heparin; sequence KKGKKVSSQR. An N-linked (GlcNAc...) asparagine glycan is attached at N117. A disulfide bridge connects residues C156 and C207. Residues N250 and N295 are each glycosylated (N-linked (GlcNAc...) asparagine). Residues C253 and C298 are joined by a disulfide bond. Fibronectin type-III domains lie at 321-411, 416-510, 514-604, 609-706, 711-810, 811-904, 909-1001, and 1005-1089; these read PPID…TGEQ, PPRR…TQQG, QPAD…TAQS, PPQK…TDED, PPRK…TTGA, VPGR…TPED, FPQN…TMPV, and FAKN…TAPD. Positions 693-712 are disordered; the sequence is GPESSPVLVRTDEDVPSGPP. N721 is a glycosylation site (N-linked (GlcNAc...) asparagine). N941, N957, and N960 each carry an N-linked (GlcNAc...) asparagine glycan. Residues 1255 to 1275 form a helical membrane-spanning segment; it reads VTGPVLAVILIILIVIAILLF. The Cytoplasmic portion of the chain corresponds to 1276 to 1898; sequence KRKRTHSPSS…YLGSFDHYAT (623 aa). A Phosphoserine modification is found at S1296. 2 Tyrosine-protein phosphatase domains span residues 1343 to 1598 and 1630 to 1889; these read FSQE…LLEA and MELE…ALEY. Residues D1507, 1539–1545, and Q1583 each bind substrate; that span reads CSAGVGR. The active-site Phosphocysteine intermediate is C1539. Residue C1830 is the Phosphocysteine intermediate of the active site.

Belongs to the protein-tyrosine phosphatase family. Receptor class 2A subfamily. Interacts with GRIP1. Interacts with PPFIA1, PPFIA2 and PPFIA3. Interacts with PTPRF. Expressed in the cell of the T lineage but not in cells of any other hemopoietic lineage.

The protein localises to the membrane. It carries out the reaction O-phospho-L-tyrosyl-[protein] + H2O = L-tyrosyl-[protein] + phosphate. Functionally, possible cell adhesion receptor. It possesses an intrinsic protein tyrosine phosphatase activity (PTPase) and dephosphorylates EPHA2 regulating its activity. In Mus musculus (Mouse), this protein is Receptor-type tyrosine-protein phosphatase F (Ptprf).